Here is a 379-residue protein sequence, read N- to C-terminus: Histone-lysine N-methyltransferase ATXR5 (379 aa).

A compositionally biased stretch (low complexity) spans 1–15 (MATWNASSPAASPCS). The interval 1–42 (MATWNASSPAASPCSSRRRTKAPARRPSSESPPPRKMKSMAE) is disordered. Residues 1–44 (MATWNASSPAASPCSSRRRTKAPARRPSSESPPPRKMKSMAEIM) constitute a chloroplast transit peptide. A PHD-type zinc finger spans residues 64–114 (NVTCEKCGSGEGDDELLLCDKCDRGFHMKCLRPIVVRVPIGTWLCVDCSDQ). The PIP motif signature appears at 122-129 (QKKILHFF). Methionine 221 is a substrate binding site. Residues 245-367 (PPLVVVFDPL…KGERLYYDYN (123 aa)) enclose the SET domain. S-adenosyl-L-methionine contacts are provided by residues 255–257 (EGY) and 317–321 (RFING). Position 339 (arginine 339) interacts with substrate. Tyrosine 366 is a binding site for S-adenosyl-L-methionine. 369–370 (YE) contacts substrate. Residue tyrosine 373 coordinates S-adenosyl-L-methionine.

The protein belongs to the class V-like SAM-binding methyltransferase superfamily. Histone-lysine methyltransferase family. TRX/MLL subfamily. Isoform 1 but not isoform 2 interacts with PCNA1 and PCNA2. Interacts (via PHD domain) with HTR1 (via N-terminus). Isoform 2 interacts with IPS1. Expressed in leaves, roots, stems, flowers, siliques and developing pollen. Up-regulated in tissues where cell division is active.

It localises to the nucleus. It is found in the plastid. The protein localises to the chloroplast. The catalysed reaction is L-lysyl(27)-[histone H3] + S-adenosyl-L-methionine = N(6)-methyl-L-lysyl(27)-[histone H3] + S-adenosyl-L-homocysteine + H(+). Histone methyltransferase that specifically monomethylates 'Lys-27' of histone H3 (H3K27me1). Has much higher activity on nucleosomes containing H3.1 than H3.3. Involved in the formation of constitutive heterochromatin and the silencing of heterochromatic elements. Influences which sets of rRNA gene variants are expressed or silenced. This chain is Histone-lysine N-methyltransferase ATXR5 (ATXR5), found in Arabidopsis thaliana (Mouse-ear cress).